The chain runs to 456 residues: MVPSNGAKVLRLLSRRCLSSSLIQDLANQKLRGVCIGSYRRLNTSVGNHANVIGDYASKSGHDRKWINFGGFNTNFGSTRSFHGTGSSFMSAKDYYSVLGVSKNAQEGEIKKAYYGLAKKLHPDMNKDDPEAETKFQEVSKAYEILKDKEKRDLYDQVGHEAFEQNASGGFPNDQGFGGGGGGGFNPFDIFGSFNGDIFNMYRQDIGGQDVKVLLDLSFMEAVQGCSKTVTFQTEMACNTCGGQGVPPGTKREKCKACNGSGMTSLRRGMLSIQTTCQKCGGAGQTFSSICKSCRGARVVRGQKSVKVTIDPGVDNSDTLKVARVGGADPEGDQPGDLYVTLKVREDPVFRREGSDIHVDAVLSVTQAILGGTIQVPTLTGDVVVKVRPGTQPGHKVVLRNKGIRARKSTKFGDQYVHFNVSIPANITQRQRELLEEFSKAEQGEYEQRTATGSSQ.

The transit peptide at 1–89 directs the protein to the mitochondrion; it reads MVPSNGAKVL…RSFHGTGSSF (89 aa). The J domain occupies 94–159; that stretch reads DYYSVLGVSK…EKRDLYDQVG (66 aa). A CR-type zinc finger spans residues 225–303; it reads GCSKTVTFQT…CRGARVVRGQ (79 aa). 8 residues coordinate Zn(2+): C238, C241, C255, C258, C277, C280, C291, and C294. CXXCXGXG motif repeat units follow at residues 238–245, 255–262, 277–284, and 291–298; these read CNTCGGQG, CKACNGSG, CQKCGGAG, and CKSCRGAR.

This sequence belongs to the DnaJ family. As to expression, widely expressed.

It is found in the mitochondrion. In terms of biological role, chaperone that may play a role in mitochondrial protein folding. Involved in female gametophyte development. Required for cell death of the synergid cells during fertilization process, and fusion of the polar nuclei during megagametogenesis. In Arabidopsis thaliana (Mouse-ear cress), this protein is Chaperone protein dnaJ GFA2, mitochondrial.